A 337-amino-acid chain; its full sequence is Phosphate acyltransferase (337 aa).

The protein belongs to the PlsX family. Homodimer. Probably interacts with PlsY.

It is found in the cytoplasm. The catalysed reaction is a fatty acyl-[ACP] + phosphate = an acyl phosphate + holo-[ACP]. Its pathway is lipid metabolism; phospholipid metabolism. In terms of biological role, catalyzes the reversible formation of acyl-phosphate (acyl-PO(4)) from acyl-[acyl-carrier-protein] (acyl-ACP). This enzyme utilizes acyl-ACP as fatty acyl donor, but not acyl-CoA. In Polynucleobacter necessarius subsp. necessarius (strain STIR1), this protein is Phosphate acyltransferase.